The primary structure comprises 599 residues: uncharacterized protein (599 aa).

Positions 1-13 are enriched in low complexity; that stretch reads MSSSSSHNSFSGS. Disordered stretches follow at residues 1–27 and 41–86; these read MSSS…IDGL and YPSN…DDTN. Residues 14–27 show a composition bias toward polar residues; that stretch reads KTNAAEGQNSIDGL. Basic and acidic residues predominate over residues 44-70; that stretch reads NEEKEVKETDIVPDENKVNELDVHKQS. Helical transmembrane passes span 97–117, 135–155, 162–182, 192–212, 223–243, 251–271, 290–310, 321–341, 359–379, 396–416, 423–443, 452–472, 489–509, and 552–572; these read IVVP…TIVT, WIGS…GVFC, IVLY…GASQ, AIQG…ISDI, GILA…GGAI, WIFF…VVFL, FIGL…ISLG, ILCY…YDTF, AALL…AYYV, VHTI…GMVL, LPLI…MICV, VMGL…PPLI, TLMF…EVIF, and VIWI…FFIK.

Belongs to the major facilitator superfamily. TCR/Tet family.

It localises to the membrane. This is an uncharacterized protein from Schizosaccharomyces pombe (strain 972 / ATCC 24843) (Fission yeast).